The following is a 356-amino-acid chain: MKLTINKNSAKWMQLPRDVLVGHGVLEEIGDVCRDLKLKGNALIVTGNTTRDVAGKRVSTLLENAGSSTEMVLTCRATMEEVDKIMQKASETGATFLLGIGSGRSIDLAKLASTRLEIPFISVPTAASHDGIASSRASIIDNGKNASVQAQAPIAVVADTEIISAAPFRFLVAGCGDIISNYTAVLDWELASRLRNEYFGEYAAALSRMAARVVIENADSIKPEHETSARLVVKALVSNGVAMSIAGSSRPASGSEHMFSHALDRIAPKPALHGEQCGVGTIMMMYLHGGNWQEIRDALKKIGAPTNAEELGIEDRYIVEALLHAHSIRPDRYTILGNGLTPSAAEKVARITKVIS.

NAD(+)-binding positions include 103–107 (GRSID) and 125–128 (TAAS). Aspartate 130 is a substrate binding site. Serine 134 is an NAD(+) binding site. Aspartate 177 provides a ligand contact to substrate. Residues aspartate 177 and histidine 257 each contribute to the Zn(2+) site. Residue histidine 261 coordinates substrate. Histidine 273 is a Zn(2+) binding site.

The protein belongs to the glycerol-1-phosphate dehydrogenase family. It depends on Zn(2+) as a cofactor.

It is found in the cytoplasm. It catalyses the reaction sn-glycerol 1-phosphate + NAD(+) = dihydroxyacetone phosphate + NADH + H(+). It carries out the reaction sn-glycerol 1-phosphate + NADP(+) = dihydroxyacetone phosphate + NADPH + H(+). It functions in the pathway membrane lipid metabolism; glycerophospholipid metabolism. In terms of biological role, catalyzes the NAD(P)H-dependent reduction of dihydroxyacetonephosphate (DHAP or glycerone phosphate) to glycerol 1-phosphate (G1P). The G1P thus generated is used as the glycerophosphate backbone of phospholipids in the cellular membranes of Archaea. The polypeptide is Glycerol-1-phosphate dehydrogenase [NAD(P)+] (Methanosarcina acetivorans (strain ATCC 35395 / DSM 2834 / JCM 12185 / C2A)).